Here is a 500-residue protein sequence, read N- to C-terminus: Citrate lyase alpha chain (500 aa).

Oligomer with a subunit composition of (alpha,beta,gamma)6.

It is found in the cytoplasm. It catalyses the reaction citrate = oxaloacetate + acetate. The catalysed reaction is citrate + acetyl-CoA = (3S)-citryl-CoA + acetate. Its function is as follows. Represents a citrate:acetyl-ACP transferase. The chain is Citrate lyase alpha chain (citF) from Haemophilus influenzae (strain ATCC 51907 / DSM 11121 / KW20 / Rd).